The following is a 424-amino-acid chain: tRNA modification GTPase MnmE (424 aa).

Positions 20, 77, and 117 each coordinate (6S)-5-formyl-5,6,7,8-tetrahydrofolate. A TrmE-type G domain is found at 212-351; the sequence is GVRVVFAGPP…LVRDLRDAAR (140 aa). K(+) is bound at residue asparagine 222. Residues 222 to 227, 241 to 247, and 266 to 269 each bind GTP; these read NAGKST, SPIAGTT, and DTAG. Serine 226 is a binding site for Mg(2+). Residues serine 241, isoleucine 243, and threonine 246 each contribute to the K(+) site. Threonine 247 is a binding site for Mg(2+). Lysine 424 is a binding site for (6S)-5-formyl-5,6,7,8-tetrahydrofolate.

This sequence belongs to the TRAFAC class TrmE-Era-EngA-EngB-Septin-like GTPase superfamily. TrmE GTPase family. Homodimer. Heterotetramer of two MnmE and two MnmG subunits. It depends on K(+) as a cofactor.

It is found in the cytoplasm. Exhibits a very high intrinsic GTPase hydrolysis rate. Involved in the addition of a carboxymethylaminomethyl (cmnm) group at the wobble position (U34) of certain tRNAs, forming tRNA-cmnm(5)s(2)U34. The polypeptide is tRNA modification GTPase MnmE (Erythrobacter litoralis (strain HTCC2594)).